A 913-amino-acid polypeptide reads, in one-letter code: Eukaryotic translation initiation factor 3 subunit C (913 aa).

The tract at residues 1–22 is disordered; the sequence is MSRFFANGSDSESESSEEEVQA. Acidic residues predominate over residues 11 to 20; that stretch reads SESESSEEEV. Phosphoserine occurs at positions 34, 165, 177, and 186. Residues 157–285 form a disordered region; that stretch reads FREAPDQESD…KRAEDDEDGE (129 aa). The span at 162–171 shows a compositional bias: acidic residues; that stretch reads DQESDVEEGE. Over residues 172–184 the composition is skewed to basic and acidic residues; that stretch reads GEPHDSDGDRAGA. A compositionally biased stretch (acidic residues) spans 214-239; it reads DEDDSDDSIDWDSDTESETESSEDEN. Residues 244-263 are compositionally biased toward basic and acidic residues; sequence MRERFLKRTTEKEDKDDDKR. Residues 264–276 show a composition bias toward basic residues; it reads KDKRKEQKHKVRK. Positions 645–821 constitute a PCI domain; sequence FHMHINLELL…ETVVMHRSEP (177 aa). Residues 856–913 are disordered; it reads RGNMGNRDRGYNRNQNNQGGNWGGQRRDNRNQRNRNQRGHHKQQQQQQQQQVQTIEEE. A compositionally biased stretch (basic residues) spans 887–898; it reads QRNRNQRGHHKQ.

It belongs to the eIF-3 subunit C family. In terms of assembly, component of the eukaryotic translation initiation factor 3 (eIF-3) complex. The eIF-3 complex interacts with pix.

It is found in the cytoplasm. Its function is as follows. Component of the eukaryotic translation initiation factor 3 (eIF-3) complex, which is involved in protein synthesis of a specialized repertoire of mRNAs and, together with other initiation factors, stimulates binding of mRNA and methionyl-tRNAi to the 40S ribosome. The eIF-3 complex specifically targets and initiates translation of a subset of mRNAs involved in cell proliferation. In Drosophila mojavensis (Fruit fly), this protein is Eukaryotic translation initiation factor 3 subunit C.